The sequence spans 398 residues: MQSLSLGQTSISKGLNYLTIMAPGNLWHMRNNFLFGSRCWMTRFSAENIFKSVSFRLFGVKCHNTDSEPLKNEDLLKNLLTMGVDIDMARKRQPGVFHRMITNEQDLKMFLLSKGASKEVIASIISRYPRAITRTPENLSKRWDLWRKIVTSDLEIVNILERSPESFFRSNNNLNLENNIKFLYSVGLTRKCLCRLLTNAPRTFSNSLDLNKQMVEFLQAAGLSLGHNDPADFVRKIILKTLYLIQSTKRVKANIEFLRSTFNLNSEELLVLICGPGAEILDLSNDYARRSYANIKEKLFSLGCTEEEVQKFVLSYPDVIFLAEKKFNDKIDCLMEENISISQIIENPRVLDSSISTLKSRIKELVNAGCNLSTLNITLLSWSKKRYEAKLKKLSRFA.

A mitochondrion-targeting transit peptide spans 1–57 (MQSLSLGQTSISKGLNYLTIMAPGNLWHMRNNFLFGSRCWMTRFSAENIFKSVSFRL). Interaction with DNA regions lie at residues 169 to 170 (RS), 246 to 250 (QSTKR), 323 to 330 (AEKKFNDK), 354 to 357 (SIST), and 383 to 390 (SKKRYEAK).

It belongs to the mTERF family. Monomer. In terms of processing, phosphoprotein with mostly four phosphate groups. While the DNA-binding activity is unaffected by the phosphorylation state, only the phosphorylated form of the protein is active for termination activity. Functioning seems to be regulated by phosphorylation.

It localises to the mitochondrion. Transcription termination factor. Binds to a 28 bp region within the tRNA(Leu(uur)) gene at a position immediately adjacent to and downstream of the 16S rRNA gene; this region comprises a tridecamer sequence critical for directing accurate termination. Binds DNA along the major grove and promotes DNA bending and partial unwinding. Promotes base flipping. Transcription termination activity appears to be polarized with highest specificity for transcripts initiated on the light strand. In Pongo abelii (Sumatran orangutan), this protein is Transcription termination factor 1, mitochondrial (MTERF1).